Reading from the N-terminus, the 326-residue chain is dTDP-4-dehydro-6-deoxy-D-allose reductase (326 aa).

NAD(+) contacts are provided by residues 15 to 21 (GALGFIG) and 129 to 132 (MSSS). Residue Tyr-160 is the Proton donor/acceptor of the active site. NAD(+) is bound by residues Lys-164 and 187-190 (PGNV).

The protein belongs to the NAD(P)-dependent epimerase/dehydratase family.

It catalyses the reaction dTDP-6-deoxy-alpha-D-allose + NAD(+) = dTDP-4-dehydro-6-deoxy-alpha-D-allose + NADH + H(+). The catalysed reaction is dTDP-6-deoxy-alpha-D-allose + NADP(+) = dTDP-4-dehydro-6-deoxy-alpha-D-allose + NADPH + H(+). In terms of biological role, catalyzes the stereospecific reduction of the C-4 keto group of dTDP-4-dehydro-6-deoxy-D-allose, leading to dTDP-6-deoxy-D-allose, an intermediate in the biosynthesis of the mycinose moiety of dihydrochalcomycin (GERI-155) antibiotic. Cannot directly reduce dTDP-4-dehydro-6-deoxyglucose, and thus acts after the epimerization step catalyzed by GerF. The chain is dTDP-4-dehydro-6-deoxy-D-allose reductase (gerKI) from Streptomyces sp.